The following is a 348-amino-acid chain: Methylthioribose-1-phosphate isomerase (348 aa).

Substrate is bound by residues 53-55 (RGA), arginine 93, and glutamine 197. Catalysis depends on aspartate 238, which acts as the Proton donor. 248 to 249 (NK) lines the substrate pocket.

It belongs to the eIF-2B alpha/beta/delta subunits family. MtnA subfamily.

The enzyme catalyses 5-(methylsulfanyl)-alpha-D-ribose 1-phosphate = 5-(methylsulfanyl)-D-ribulose 1-phosphate. It functions in the pathway amino-acid biosynthesis; L-methionine biosynthesis via salvage pathway; L-methionine from S-methyl-5-thio-alpha-D-ribose 1-phosphate: step 1/6. Catalyzes the interconversion of methylthioribose-1-phosphate (MTR-1-P) into methylthioribulose-1-phosphate (MTRu-1-P). This Gloeobacter violaceus (strain ATCC 29082 / PCC 7421) protein is Methylthioribose-1-phosphate isomerase.